We begin with the raw amino-acid sequence, 161 residues long: Spermidine N(1)-acetyltransferase (161 aa).

One can recognise an N-acetyltransferase domain in the interval 3 to 160 (IEIRKLSIED…SDFIMEKKYE (158 aa)). Residues 92–94 (LYL), 99–104 (THKKIG), N131, and S136 each bind acetyl-CoA. The active-site Proton donor is the Y138. K140 contributes to the acetyl-CoA binding site.

The protein belongs to the acetyltransferase family. As to quaternary structure, monomer or homodimer.

The enzyme catalyses an alkane-alpha,omega-diamine + acetyl-CoA = an N-acetylalkane-alpha,omega-diamine + CoA + H(+). In terms of biological role, involved in the protection against polyamine toxicity by regulating their concentration. Could also be involved in the negative control of sporulation as well as production of degradative enzymes such as alpha-amylase, levansucrase and alkaline phosphatase. Catalyzes the transfer of an acetyl group from acetyl coenzyme A (AcCoA) to an acceptor substrate and release both CoA and the acetylated product. It can use a variety of substrates including spermidine, L-tryptophan, L-leucine, L-lysine, dopamine and tyramine. This Thermoplasma acidophilum (strain ATCC 25905 / DSM 1728 / JCM 9062 / NBRC 15155 / AMRC-C165) protein is Spermidine N(1)-acetyltransferase.